We begin with the raw amino-acid sequence, 75 residues long: Exodeoxyribonuclease 7 small subunit (75 aa).

Belongs to the XseB family. Heterooligomer composed of large and small subunits.

It is found in the cytoplasm. The catalysed reaction is Exonucleolytic cleavage in either 5'- to 3'- or 3'- to 5'-direction to yield nucleoside 5'-phosphates.. In terms of biological role, bidirectionally degrades single-stranded DNA into large acid-insoluble oligonucleotides, which are then degraded further into small acid-soluble oligonucleotides. The protein is Exodeoxyribonuclease 7 small subunit of Geobacter sp. (strain M21).